A 129-amino-acid polypeptide reads, in one-letter code: Phosphoribosyl-AMP cyclohydrolase (129 aa).

Residue D78 participates in Mg(2+) binding. Residue C79 participates in Zn(2+) binding. Residues D80 and D82 each contribute to the Mg(2+) site. Positions 96 and 103 each coordinate Zn(2+).

Belongs to the PRA-CH family. As to quaternary structure, homodimer. Requires Mg(2+) as cofactor. The cofactor is Zn(2+).

The protein resides in the cytoplasm. The enzyme catalyses 1-(5-phospho-beta-D-ribosyl)-5'-AMP + H2O = 1-(5-phospho-beta-D-ribosyl)-5-[(5-phospho-beta-D-ribosylamino)methylideneamino]imidazole-4-carboxamide. It participates in amino-acid biosynthesis; L-histidine biosynthesis; L-histidine from 5-phospho-alpha-D-ribose 1-diphosphate: step 3/9. In terms of biological role, catalyzes the hydrolysis of the adenine ring of phosphoribosyl-AMP. The sequence is that of Phosphoribosyl-AMP cyclohydrolase from Nitrosomonas eutropha (strain DSM 101675 / C91 / Nm57).